The primary structure comprises 302 residues: Protoheme IX farnesyltransferase 1 (302 aa).

Transmembrane regions (helical) follow at residues 30–50 (VVAL…PGAV), 52–72 (LQPL…AAAF), 102–122 (ALTF…TLVN), 124–144 (LTAW…TAYL), 152–172 (IVVG…SVTG), 178–198 (ALLL…ALAI), 224–244 (CILL…LVGM), 245–265 (CGPL…YKSW), and 282–302 (FSIY…YLWV).

Belongs to the UbiA prenyltransferase family. Protoheme IX farnesyltransferase subfamily.

It is found in the cell inner membrane. The enzyme catalyses heme b + (2E,6E)-farnesyl diphosphate + H2O = Fe(II)-heme o + diphosphate. It functions in the pathway porphyrin-containing compound metabolism; heme O biosynthesis; heme O from protoheme: step 1/1. In terms of biological role, converts heme B (protoheme IX) to heme O by substitution of the vinyl group on carbon 2 of heme B porphyrin ring with a hydroxyethyl farnesyl side group. The sequence is that of Protoheme IX farnesyltransferase 1 from Shewanella woodyi (strain ATCC 51908 / MS32).